Reading from the N-terminus, the 87-residue chain is Small ribosomal subunit protein bS20 (87 aa).

Residues 1–11 (MANIKSAKKRA) are compositionally biased toward basic residues. The segment at 1–27 (MANIKSAKKRAVQSEKRRQHNASQRSM) is disordered.

It belongs to the bacterial ribosomal protein bS20 family.

Its function is as follows. Binds directly to 16S ribosomal RNA. The protein is Small ribosomal subunit protein bS20 of Actinobacillus succinogenes (strain ATCC 55618 / DSM 22257 / CCUG 43843 / 130Z).